The sequence spans 491 residues: Myocilin (491 aa).

A signal peptide spans 1–18; the sequence is MPAVQLLLLACPVWDVGA. The N-linked (GlcNAc...) asparagine glycan is linked to asparagine 43. The stretch at 98–171 forms a coiled coil; it reads QETPEGLQRE…QEVARLRRGQ (74 aa). The interval 151–189 is disordered; it reads ENLARRLESSSQEVARLRRGQCPQTRDTARDVPPGSREV. The 260-residue stretch at 231 to 490 folds into the Olfactomedin-like domain; the sequence is GCGELVWVGE…MVTYDIKLSK (260 aa). Cysteines 232 and 420 form a disulfide. Residues aspartate 367, asparagine 415, alanine 416, isoleucine 464, and aspartate 465 each contribute to the Ca(2+) site.

As to quaternary structure, homodimer (via N-terminus). Can also form higher oligomers. Interacts with OLFM3, FN1, NRCAM, GLDN and NFASC. Interacts (via N-terminus) with MYL2. Interacts with SFRP1, FRZB, FZD7, FZD10, FZD1 and WIF1; regulates Wnt signaling. Interacts with SNTA1; regulates muscle hypertrophy. Interacts with ERBB2 and ERBB3; activates ERBB2-ERBB3 signaling pathway. Interacts with SNCG; affects its secretion and its aggregation. Palmitoylated. Post-translationally, undergoes a calcium-dependent proteolytic cleavage at Arg-213 by CAPN2 in the endoplasmic reticulum. The result is the production of two fragments, one of 35 kDa containing the C-terminal olfactomedin-like domain, and another of 20 kDa containing the N-terminal leucine zipper-like domain. In terms of processing, glycosylated.

It is found in the secreted. The protein resides in the golgi apparatus. It localises to the cytoplasmic vesicle. Its subcellular location is the extracellular space. The protein localises to the extracellular matrix. It is found in the extracellular exosome. The protein resides in the mitochondrion. It localises to the mitochondrion intermembrane space. Its subcellular location is the mitochondrion inner membrane. The protein localises to the mitochondrion outer membrane. It is found in the rough endoplasmic reticulum. The protein resides in the cell projection. It localises to the cilium. Its subcellular location is the endoplasmic reticulum. In terms of biological role, secreted glycoprotein regulating the activation of different signaling pathways in adjacent cells to control different processes including cell adhesion, cell-matrix adhesion, cytoskeleton organization and cell migration. Promotes substrate adhesion, spreading and formation of focal contacts. Negatively regulates cell-matrix adhesion and stress fiber assembly through Rho protein signal transduction. Modulates the organization of actin cytoskeleton by stimulating the formation of stress fibers through interactions with components of Wnt signaling pathways. Promotes cell migration through activation of PTK2 and the downstream phosphatidylinositol 3-kinase signaling. Plays a role in bone formation and promotes osteoblast differentiation in a dose-dependent manner through mitogen-activated protein kinase signaling. Mediates myelination in the peripheral nervous system through ERBB2/ERBB3 signaling. Plays a role as a regulator of muscle hypertrophy through the components of dystrophin-associated protein complex. Involved in positive regulation of mitochondrial depolarization. Plays a role in neurite outgrowth. May participate in the obstruction of fluid outflow in the trabecular meshwork. The chain is Myocilin (MYOC) from Macaca fascicularis (Crab-eating macaque).